The primary structure comprises 806 residues: Leucine--tRNA ligase (806 aa).

The 'HIGH' region signature appears at 54-64; that stretch reads SYPSGDLHMGH. A 'KMSKS' region motif is present at residues 571-575; the sequence is KMSKS. Lysine 574 serves as a coordination point for ATP.

Belongs to the class-I aminoacyl-tRNA synthetase family.

It is found in the cytoplasm. The catalysed reaction is tRNA(Leu) + L-leucine + ATP = L-leucyl-tRNA(Leu) + AMP + diphosphate. This Tropheryma whipplei (strain TW08/27) (Whipple's bacillus) protein is Leucine--tRNA ligase.